A 422-amino-acid chain; its full sequence is Telomerase-associated protein of 50 kDa (422 aa).

In terms of assembly, component of the telomerase holoenzyme complex, composed of the catalytic core (the catalytic subunit TERT, the telomerase RNA template component TER and TAP65/p65), which is associated with two heterotrimeric subcomplexes: (i) the replication protein A (RPA)-related subcomplex, composed of TEB1, RPA2/TEB2 and RPA3/TEB3 and (ii) the CST-like subcomplex, composed of TAP75/p75, TAP45/p45 and TAP19/p19. TEB1 and the CST-like subcomplex are tethered to the catalytic core by TAP50/p50.

Its subcellular location is the chromosome. The protein localises to the telomere. Its function is as follows. Tethering component of the holoenzyme telomerase ribonucleoprotein (RNP) complex. Telomerase is an essential ribonucleoprotein enzyme that copies new telomeric repeats onto chromosome ends by repetitively synthesizing the short telomere-repeat sequence 5'-TTGGGG-3' using an RNA template component TER. In the telomerase holoenzyme complex, acts as a hub that anchors the two heterotrimeric subcomplexes with the catalytic core. The chain is Telomerase-associated protein of 50 kDa from Tetrahymena thermophila (strain SB210).